The sequence spans 288 residues: 4-hydroxybenzoate octaprenyltransferase (288 aa).

6 consecutive transmembrane segments (helical) span residues 33–53 (LWALWVASPGVPPLWILAVFV), 99–119 (LFIVLVLLSFLLVLTLNTMTI), 163–183 (ESLPLSCWLMFLANILWAVAY), 213–233 (LIIGILQVAVLALMGAVGWLN), 234–254 (GLGWEYYWSLFVAAGLFGWQQ), and 268–288 (AFMNNNYVGLVLFLGLAMSYL).

Belongs to the UbiA prenyltransferase family. Requires Mg(2+) as cofactor.

It localises to the cell inner membrane. It carries out the reaction all-trans-octaprenyl diphosphate + 4-hydroxybenzoate = 4-hydroxy-3-(all-trans-octaprenyl)benzoate + diphosphate. Its pathway is cofactor biosynthesis; ubiquinone biosynthesis. Catalyzes the prenylation of para-hydroxybenzoate (PHB) with an all-trans polyprenyl group. Mediates the second step in the final reaction sequence of ubiquinone-8 (UQ-8) biosynthesis, which is the condensation of the polyisoprenoid side chain with PHB, generating the first membrane-bound Q intermediate 3-octaprenyl-4-hydroxybenzoate. In Klebsiella pneumoniae subsp. pneumoniae (strain ATCC 700721 / MGH 78578), this protein is 4-hydroxybenzoate octaprenyltransferase.